Reading from the N-terminus, the 599-residue chain is Beta-myrcene synthase, chloroplastic (599 aa).

The transit peptide at 1–34 (MWSTISISMNVAILKKPLNFLHNSNNKASNPRCV) directs the protein to the chloroplast. Positions 352, 356, 496, 500, and 504 each coordinate Mg(2+). Residues 352–356 (DDVYD) carry the DDXXD motif motif.

Belongs to the terpene synthase family. The cofactor is Mg(2+). Mn(2+) is required as a cofactor.

Its subcellular location is the plastid. The protein resides in the chloroplast. It carries out the reaction (2E)-geranyl diphosphate = beta-myrcene + diphosphate. The protein operates within secondary metabolite biosynthesis; terpenoid biosynthesis. Its function is as follows. Monoterpene synthase that catalyzes the formation of beta-myrcene from geranyl diphosphate. In Ocimum basilicum (Sweet basil), this protein is Beta-myrcene synthase, chloroplastic (MYS).